We begin with the raw amino-acid sequence, 176 residues long: ATP-dependent protease subunit HslV (176 aa).

T2 is a catalytic residue. Residues G157, C160, and T163 each contribute to the Na(+) site.

Belongs to the peptidase T1B family. HslV subfamily. A double ring-shaped homohexamer of HslV is capped on each side by a ring-shaped HslU homohexamer. The assembly of the HslU/HslV complex is dependent on binding of ATP.

The protein resides in the cytoplasm. It carries out the reaction ATP-dependent cleavage of peptide bonds with broad specificity.. Allosterically activated by HslU binding. In terms of biological role, protease subunit of a proteasome-like degradation complex believed to be a general protein degrading machinery. The polypeptide is ATP-dependent protease subunit HslV (Marinobacter nauticus (strain ATCC 700491 / DSM 11845 / VT8) (Marinobacter aquaeolei)).